Here is a 184-residue protein sequence, read N- to C-terminus: Der GTPase-activating protein YihI (184 aa).

Disordered regions lie at residues 1–106 and 159–184; these read MNRP…PTMS and LGDDDEEEQQEDMLQLLKRNNPKDAL. Over residues 8–32 the composition is skewed to basic and acidic residues; that stretch reads VADKAEKSKVKRKTREELEREARER. Residues 159 to 169 are compositionally biased toward acidic residues; the sequence is LGDDDEEEQQE.

Belongs to the YihI family. In terms of assembly, interacts with Der.

In terms of biological role, a GTPase-activating protein (GAP) that modifies Der/EngA GTPase function. May play a role in ribosome biogenesis. This Pectobacterium atrosepticum (strain SCRI 1043 / ATCC BAA-672) (Erwinia carotovora subsp. atroseptica) protein is Der GTPase-activating protein YihI.